The primary structure comprises 161 residues: Cytochrome c-type biogenesis protein CcmE (161 aa).

The Cytoplasmic segment spans residues Met-1–Arg-13. The chain crosses the membrane as a helical; Signal-anchor for type II membrane protein span at residues Leu-14–Gly-34. The Periplasmic portion of the chain corresponds to Leu-35 to Leu-161. Residues His-128 and Tyr-132 each contribute to the heme site.

The protein belongs to the CcmE/CycJ family.

It localises to the cell inner membrane. Its function is as follows. Heme chaperone required for the biogenesis of c-type cytochromes. Transiently binds heme delivered by CcmC and transfers the heme to apo-cytochromes in a process facilitated by CcmF and CcmH. This Phenylobacterium zucineum (strain HLK1) protein is Cytochrome c-type biogenesis protein CcmE.